Here is a 561-residue protein sequence, read N- to C-terminus: V-type proton ATPase catalytic subunit A (561 aa).

190–197 (GAFGCGKT) provides a ligand contact to ATP.

The protein belongs to the ATPase alpha/beta chains family. In terms of assembly, V-ATPase is a heteromultimeric enzyme composed of a peripheral catalytic V1 complex (main components: subunits A, B, C, D, E, and F) attached to an integral membrane V0 proton pore complex (main component: the proteolipid protein). In terms of tissue distribution, high expression in the mesocotyl tip of etiolated seedlings compared to the base.

It carries out the reaction ATP + H2O + 4 H(+)(in) = ADP + phosphate + 5 H(+)(out). Its function is as follows. Catalytic subunit of the peripheral V1 complex of vacuolar ATPase. V-ATPase vacuolar ATPase is responsible for acidifying a variety of intracellular compartments in eukaryotic cells. This Zea mays (Maize) protein is V-type proton ATPase catalytic subunit A.